Reading from the N-terminus, the 100-residue chain is Co-chaperonin GroES (100 aa).

Belongs to the GroES chaperonin family. As to quaternary structure, heptamer of 7 subunits arranged in a ring. Interacts with the chaperonin GroEL.

Its subcellular location is the cytoplasm. Functionally, together with the chaperonin GroEL, plays an essential role in assisting protein folding. The GroEL-GroES system forms a nano-cage that allows encapsulation of the non-native substrate proteins and provides a physical environment optimized to promote and accelerate protein folding. GroES binds to the apical surface of the GroEL ring, thereby capping the opening of the GroEL channel. The polypeptide is Co-chaperonin GroES (Mycobacterium leprae (strain Br4923)).